Here is a 444-residue protein sequence, read N- to C-terminus: NADH-ubiquinone oxidoreductase chain 4 (444 aa).

13 consecutive transmembrane segments (helical) span residues 4-24 (YLFM…WWLV), 28-48 (IFLL…LSMI), 53-73 (GVDF…CLMI), 87-107 (NFFV…FSSL), 109-129 (LFSF…LILG), 141-161 (VYLM…LFSI), 173-193 (LIDF…AFLV), 212-232 (PISG…YGIF), 245-265 (FNYF…FVCF), 272-294 (SLIA…TMNW), 306-326 (GHGI…ELLG), 330-350 (LLIN…WFLL), and 373-393 (IISW…FSAV).

The protein belongs to the complex I subunit 4 family.

It is found in the mitochondrion membrane. The enzyme catalyses a ubiquinone + NADH + 5 H(+)(in) = a ubiquinol + NAD(+) + 4 H(+)(out). Its function is as follows. Core subunit of the mitochondrial membrane respiratory chain NADH dehydrogenase (Complex I) that is believed to belong to the minimal assembly required for catalysis. Complex I functions in the transfer of electrons from NADH to the respiratory chain. The immediate electron acceptor for the enzyme is believed to be ubiquinone. In Locusta migratoria (Migratory locust), this protein is NADH-ubiquinone oxidoreductase chain 4 (ND4).